Consider the following 571-residue polypeptide: Proline--tRNA ligase (571 aa).

It belongs to the class-II aminoacyl-tRNA synthetase family. ProS type 1 subfamily. As to quaternary structure, homodimer.

The protein resides in the cytoplasm. The enzyme catalyses tRNA(Pro) + L-proline + ATP = L-prolyl-tRNA(Pro) + AMP + diphosphate. Catalyzes the attachment of proline to tRNA(Pro) in a two-step reaction: proline is first activated by ATP to form Pro-AMP and then transferred to the acceptor end of tRNA(Pro). As ProRS can inadvertently accommodate and process non-cognate amino acids such as alanine and cysteine, to avoid such errors it has two additional distinct editing activities against alanine. One activity is designated as 'pretransfer' editing and involves the tRNA(Pro)-independent hydrolysis of activated Ala-AMP. The other activity is designated 'posttransfer' editing and involves deacylation of mischarged Ala-tRNA(Pro). The misacylated Cys-tRNA(Pro) is not edited by ProRS. This Vibrio atlanticus (strain LGP32) (Vibrio splendidus (strain Mel32)) protein is Proline--tRNA ligase.